Here is a 359-residue protein sequence, read N- to C-terminus: MTGFLPEPLRMLVTSPALLDFTSDGPLPYALRQKFTGKPPPVTSNLSLASQTVLVTGATSGVGLEAARQLAQLGPRLLILGVRNASKAEQIKSELERDTPNLTVQVAELDLESLLSVDRFVDELSANSIRLDLALLNAGFFAHDDRITDDGYSPLFQVNFLSTAYLTLKLLPLLHTTAPPHPPGTTTPPGPRLVLVTSEAHAWTTFPDVPRPTENRTQPILSVFQDKNTLGSADDQYARAKLLLALFGKELSRRLTAAENDTTVVITTPGFCASNFFPDGMMTRLIQLTSARSVQQGGALHVFAATAPGPEIHGAYLRDGKPTGLSKFAQGPQGQILQERLWGEMEEFFMQRGGSPLGM.

NADP(+) is bound by residues lysine 87, aspartate 110, asparagine 137, tyrosine 237, and lysine 241. Catalysis depends on tyrosine 237, which acts as the Proton donor. Lysine 241 (lowers pKa of active site Tyr) is an active-site residue.

Belongs to the short-chain dehydrogenases/reductases (SDR) family.

The protein operates within antifungal biosynthesis. In terms of biological role, short chain dehydrogenase; part of the gene cluster that mediates the biosynthesis of the tetrahydropyranyl antifungal agent restricticin that acts as an inhibitor of CYP51 and blocks the ergosterol biosynthesis. The highly reducing polyketide synthase resH, the short chain dehydrogenase resG, the cyclase resF, the FAD-dependent monooxygenase resA and the enoylreductase resD are required to generate the first stable intermediate desmethylrestrictinol. ResH with resD biosynthesize the first polyketide chain intermediate that is reduced by resG, followed by epoxidation by resA before 6-endo cyclization via epoxide opening by resF leads to desmethylrestrictinol. The methyltransferase resE then catalyzes the C4 O-methylation of desmethylrestrictinol to produce restrictinol, and the nonribosomal peptide synthetase resC catalyzes the C3 esterification of restrictinol with glycine that leads to restricticin. This chain is Short chain dehydrogenase resG, found in Aspergillus sclerotiorum.